Reading from the N-terminus, the 367-residue chain is tRNA/tmRNA (uracil-C(5))-methyltransferase (367 aa).

The S-adenosyl-L-methionine site is built by glutamine 190, tyrosine 218, asparagine 223, glutamate 239, and aspartate 299. Catalysis depends on cysteine 324, which acts as the Nucleophile. Glutamate 358 functions as the Proton acceptor in the catalytic mechanism.

Belongs to the class I-like SAM-binding methyltransferase superfamily. RNA M5U methyltransferase family. TrmA subfamily.

It catalyses the reaction uridine(54) in tRNA + S-adenosyl-L-methionine = 5-methyluridine(54) in tRNA + S-adenosyl-L-homocysteine + H(+). It carries out the reaction uridine(341) in tmRNA + S-adenosyl-L-methionine = 5-methyluridine(341) in tmRNA + S-adenosyl-L-homocysteine + H(+). Functionally, dual-specificity methyltransferase that catalyzes the formation of 5-methyluridine at position 54 (m5U54) in all tRNAs, and that of position 341 (m5U341) in tmRNA (transfer-mRNA). The protein is tRNA/tmRNA (uracil-C(5))-methyltransferase of Dickeya chrysanthemi (strain Ech1591) (Dickeya zeae (strain Ech1591)).